Here is a 178-residue protein sequence, read N- to C-terminus: MASLSRAPQQWATFARVWYLLDGKMQPPGKLAALASVRLQGLHKPVYHQLSDCGDHVVIMNTRHIAFSGNKWEQKVYSSHTGYPGGFKQVTAAQLHRKDPVAIVKLAIYGMLPKNLHRRTLMQRLHLFPDEDIPEDILKNLTEELPQPRKVPRRLDEYTQEEIEAFPRVWSPPEDYRL.

This sequence belongs to the universal ribosomal protein uL13 family. As to quaternary structure, component of the mitochondrial ribosome large subunit (39S) which comprises a 16S rRNA and about 50 distinct proteins. Interacts with OXA1L.

The protein resides in the mitochondrion. The polypeptide is Large ribosomal subunit protein uL13m (MRPL13) (Bos taurus (Bovine)).